A 331-amino-acid chain; its full sequence is Serpentine receptor class alpha-9 (331 aa).

The next 7 helical transmembrane spans lie at 26–46 (IDLL…QLVL), 58–78 (LILE…IEAI), 104–124 (YLKV…GLMI), 142–162 (IIGF…GKLF), 189–209 (YFTV…LLKI), 238–258 (VCFL…GVGA), and 275–295 (LCVV…LLLI).

This sequence belongs to the nematode receptor-like protein sra family.

It is found in the membrane. In Caenorhabditis elegans, this protein is Serpentine receptor class alpha-9 (sra-9).